We begin with the raw amino-acid sequence, 618 residues long: 1-aminocyclopropane-1-carboxylate synthase-like protein 1 (618 aa).

A compositionally biased stretch (low complexity) spans 11–26 (QGTQTPAAQTTCAPST). Residues 11-54 (QGTQTPAAQTTCAPSTMSSSSRPPLETLQAQSVSADETPGSALP) form a disordered region. Residues 27–45 (MSSSSRPPLETLQAQSVSA) show a composition bias toward polar residues. E122 provides a ligand contact to substrate. N6-(pyridoxal phosphate)lysine is present on K340.

The protein belongs to the class-I pyridoxal-phosphate-dependent aminotransferase family.

In Takifugu rubripes (Japanese pufferfish), this protein is 1-aminocyclopropane-1-carboxylate synthase-like protein 1 (accs).